Consider the following 304-residue polypeptide: Ornithine carbamoyltransferase (304 aa).

Residues 47 to 50 (STRT), Arg98, and 125 to 128 (HPCQ) each bind carbamoyl phosphate. L-ornithine contacts are provided by residues Asn156, Asp221, and 225-226 (SM). Residues 262–263 (CL) and Arg290 contribute to the carbamoyl phosphate site.

The protein belongs to the aspartate/ornithine carbamoyltransferase superfamily. OTCase family.

The protein resides in the cytoplasm. The enzyme catalyses carbamoyl phosphate + L-ornithine = L-citrulline + phosphate + H(+). Its pathway is amino-acid biosynthesis; L-arginine biosynthesis; L-arginine from L-ornithine and carbamoyl phosphate: step 1/3. Its function is as follows. Reversibly catalyzes the transfer of the carbamoyl group from carbamoyl phosphate (CP) to the N(epsilon) atom of ornithine (ORN) to produce L-citrulline. This chain is Ornithine carbamoyltransferase, found in Methanococcus maripaludis (strain C5 / ATCC BAA-1333).